The following is a 593-amino-acid chain: Probable serine/threonine-protein kinase samkB (593 aa).

The 65-residue stretch at 29–93 (WNNEAVCEWL…SIFKKLKNNN (65 aa)) folds into the SAM domain. Positions 108-157 (ESNSINNSNNNNNNNNNNNNNNNNNNNNNNNNNNNNNNNNNNNNNNKIDT) are disordered. Low complexity predominate over residues 113-153 (NNSNNNNNNNNNNNNNNNNNNNNNNNNNNNNNNNNNNNNNN). The Protein kinase domain occupies 186-438 (YKLIEEIGRG…SKQLLEAQWF (253 aa)). Residues 192-200 (IGRGAFSIV) and K216 contribute to the ATP site. D313 acts as the Proton acceptor in catalysis.

It belongs to the protein kinase superfamily. Ser/Thr protein kinase family.

It catalyses the reaction L-seryl-[protein] + ATP = O-phospho-L-seryl-[protein] + ADP + H(+). It carries out the reaction L-threonyl-[protein] + ATP = O-phospho-L-threonyl-[protein] + ADP + H(+). In Dictyostelium discoideum (Social amoeba), this protein is Probable serine/threonine-protein kinase samkB (samkB).